A 410-amino-acid chain; its full sequence is LL-diaminopimelate aminotransferase (410 aa).

Substrate is bound by residues tyrosine 15 and glycine 42. Residues tyrosine 72, 108-109, tyrosine 132, asparagine 187, tyrosine 218, and 246-248 each bind pyridoxal 5'-phosphate; these read SK and SFS. Residues lysine 109, tyrosine 132, and asparagine 187 each coordinate substrate. Residue lysine 249 is modified to N6-(pyridoxal phosphate)lysine. Residues arginine 257 and asparagine 292 each contribute to the pyridoxal 5'-phosphate site. Positions 292 and 388 each coordinate substrate.

It belongs to the class-I pyridoxal-phosphate-dependent aminotransferase family. LL-diaminopimelate aminotransferase subfamily. Homodimer. Pyridoxal 5'-phosphate serves as cofactor.

The enzyme catalyses (2S,6S)-2,6-diaminopimelate + 2-oxoglutarate = (S)-2,3,4,5-tetrahydrodipicolinate + L-glutamate + H2O + H(+). Its pathway is amino-acid biosynthesis; L-lysine biosynthesis via DAP pathway; LL-2,6-diaminopimelate from (S)-tetrahydrodipicolinate (aminotransferase route): step 1/1. Involved in the synthesis of meso-diaminopimelate (m-DAP or DL-DAP), required for both lysine and peptidoglycan biosynthesis. Catalyzes the direct conversion of tetrahydrodipicolinate to LL-diaminopimelate. This Geotalea daltonii (strain DSM 22248 / JCM 15807 / FRC-32) (Geobacter daltonii) protein is LL-diaminopimelate aminotransferase.